Reading from the N-terminus, the 181-residue chain is Large ribosomal subunit protein uL5 (181 aa).

Belongs to the universal ribosomal protein uL5 family. Part of the 50S ribosomal subunit; part of the 5S rRNA/L5/L18/L25 subcomplex. Contacts the 5S rRNA and the P site tRNA. Forms a bridge to the 30S subunit in the 70S ribosome.

In terms of biological role, this is one of the proteins that bind and probably mediate the attachment of the 5S RNA into the large ribosomal subunit, where it forms part of the central protuberance. In the 70S ribosome it contacts protein S13 of the 30S subunit (bridge B1b), connecting the 2 subunits; this bridge is implicated in subunit movement. Contacts the P site tRNA; the 5S rRNA and some of its associated proteins might help stabilize positioning of ribosome-bound tRNAs. In Baumannia cicadellinicola subsp. Homalodisca coagulata, this protein is Large ribosomal subunit protein uL5.